The primary structure comprises 494 residues: Glycerol kinase (494 aa).

Threonine 13 is a binding site for ADP. ATP contacts are provided by threonine 13, threonine 14, and serine 15. Threonine 13 contributes to the sn-glycerol 3-phosphate binding site. Arginine 17 is a binding site for ADP. The sn-glycerol 3-phosphate site is built by arginine 83, glutamate 84, tyrosine 135, and aspartate 244. Glycerol is bound by residues arginine 83, glutamate 84, tyrosine 135, aspartate 244, and glutamine 245. ADP contacts are provided by threonine 266 and glycine 309. Threonine 266, glycine 309, glutamine 313, and glycine 410 together coordinate ATP. Glycine 410 and asparagine 414 together coordinate ADP.

Belongs to the FGGY kinase family.

It carries out the reaction glycerol + ATP = sn-glycerol 3-phosphate + ADP + H(+). It participates in polyol metabolism; glycerol degradation via glycerol kinase pathway; sn-glycerol 3-phosphate from glycerol: step 1/1. With respect to regulation, inhibited by fructose 1,6-bisphosphate (FBP). Its function is as follows. Key enzyme in the regulation of glycerol uptake and metabolism. Catalyzes the phosphorylation of glycerol to yield sn-glycerol 3-phosphate. The polypeptide is Glycerol kinase (Shewanella sp. (strain MR-7)).